Consider the following 442-residue polypeptide: Mirror-image polydactyly gene 1 protein (442 aa).

Residues 1-39 (MENWSKDITHSYLEQETTGINKSTQPDEQLTMNSEKSMH) form a disordered region. Polar residues predominate over residues 12–35 (YLEQETTGINKSTQPDEQLTMNSE). 2 coiled-coil regions span residues 107–212 (SDKE…LENI) and 253–435 (ECKM…KVGT).

Expressed very weakly in heart, liver, skeletal muscle, kidney, pancreas and fetal kidney. Not detected in brain, placenta and lung.

This Homo sapiens (Human) protein is Mirror-image polydactyly gene 1 protein (MIPOL1).